A 450-amino-acid chain; its full sequence is Phosphoglucosamine mutase 2 (450 aa).

Ser101 acts as the Phosphoserine intermediate in catalysis. Positions 101, 245, 247, and 249 each coordinate Mg(2+). Position 101 is a phosphoserine (Ser101).

The protein belongs to the phosphohexose mutase family. The cofactor is Mg(2+). Activated by phosphorylation.

It carries out the reaction alpha-D-glucosamine 1-phosphate = D-glucosamine 6-phosphate. Its function is as follows. Catalyzes the conversion of glucosamine-6-phosphate to glucosamine-1-phosphate. The polypeptide is Phosphoglucosamine mutase 2 (Shewanella frigidimarina (strain NCIMB 400)).